Reading from the N-terminus, the 432-residue chain is DnaJ-like protein 1 (432 aa).

Residues 4–73 form the J domain; sequence DTEYYDLLGV…RAKYDKYGRK (70 aa). Residues 117 to 187 are disordered; that stretch reads NAEDEAEKEK…KKNEQVGAEA (71 aa).

This sequence belongs to the DnaJ family. In terms of assembly, interacts with SLN1.

The protein localises to the cytoplasm. Its function is as follows. Required for peroxisomal protein import which maintains the function of peroxisomes. This Saccharomyces cerevisiae (strain ATCC 204508 / S288c) (Baker's yeast) protein is DnaJ-like protein 1 (DJP1).